The following is a 64-amino-acid chain: Large ribosomal subunit protein bL35 (64 aa).

It belongs to the bacterial ribosomal protein bL35 family.

The protein is Large ribosomal subunit protein bL35 of Lactiplantibacillus plantarum (strain ATCC BAA-793 / NCIMB 8826 / WCFS1) (Lactobacillus plantarum).